Here is a 253-residue protein sequence, read N- to C-terminus: Pupal cuticle protein (253 aa).

Positions 1 to 18 (MKSMIVVACLALACGAHA) are cleaved as a signal peptide. Positions 54 to 66 (LQQASKNNPNPND) are enriched in polar residues. The segment at 54–74 (LQQASKNNPNPNDDGSYDPRW) is disordered. Tandem repeats lie at residues 97–100 (AAPA), 115–118 (AAPA), and 154–157 (AAPA). Low complexity predominate over residues 155–167 (APAQQQWNAPAHQ). Disordered regions lie at residues 155-178 (APAQ…QDWN) and 187-206 (APAH…APAH). Residues 189–201 (AHQSWNGAPSWQS) are compositionally biased toward polar residues.

Functionally, component of the cuticle of the pupae of silk moth. The sequence is that of Pupal cuticle protein (PCP) from Bombyx mori (Silk moth).